The sequence spans 191 residues: UPF0312 protein PSPA7_0523 (191 aa).

Positions 1–23 are cleaved as a signal peptide; it reads MLKKTLAALALGSALFTAGQAMA.

It belongs to the UPF0312 family. Type 1 subfamily.

The protein resides in the periplasm. This chain is UPF0312 protein PSPA7_0523, found in Pseudomonas paraeruginosa (strain DSM 24068 / PA7) (Pseudomonas aeruginosa (strain PA7)).